Reading from the N-terminus, the 334-residue chain is Glyceraldehyde-3-phosphate dehydrogenase (334 aa).

NAD(+) is bound by residues 10–11 (RI), aspartate 33, lysine 77, and threonine 119. D-glyceraldehyde 3-phosphate contacts are provided by residues 149-151 (SCT), threonine 180, 209-210 (TG), and arginine 232. The active-site Nucleophile is the cysteine 150. Asparagine 314 contributes to the NAD(+) binding site.

The protein belongs to the glyceraldehyde-3-phosphate dehydrogenase family. Homotetramer.

Its subcellular location is the cytoplasm. The catalysed reaction is D-glyceraldehyde 3-phosphate + phosphate + NAD(+) = (2R)-3-phospho-glyceroyl phosphate + NADH + H(+). The protein operates within carbohydrate degradation; glycolysis; pyruvate from D-glyceraldehyde 3-phosphate: step 1/5. Catalyzes the oxidative phosphorylation of glyceraldehyde 3-phosphate (G3P) to 1,3-bisphosphoglycerate (BPG) using the cofactor NAD. The first reaction step involves the formation of a hemiacetal intermediate between G3P and a cysteine residue, and this hemiacetal intermediate is then oxidized to a thioester, with concomitant reduction of NAD to NADH. The reduced NADH is then exchanged with the second NAD, and the thioester is attacked by a nucleophilic inorganic phosphate to produce BPG. The chain is Glyceraldehyde-3-phosphate dehydrogenase (gap) from Chlamydia trachomatis serovar D (strain ATCC VR-885 / DSM 19411 / UW-3/Cx).